A 262-amino-acid chain; its full sequence is Global transcriptional regulator CodY (262 aa).

The tract at residues 1–159 (MATLLEKTRK…ATTVIGVQLS (159 aa)) is GAF domain. Positions 207–226 (ASVIADKIGITRSVIVNALR) form a DNA-binding region, H-T-H motif.

Belongs to the CodY family.

The protein localises to the cytoplasm. In terms of biological role, DNA-binding global transcriptional regulator which is involved in the adaptive response to starvation and acts by directly or indirectly controlling the expression of numerous genes in response to nutrient availability. During rapid exponential growth, CodY is highly active and represses genes whose products allow adaptation to nutrient depletion. In Lactococcus lactis subsp. cremoris (strain SK11), this protein is Global transcriptional regulator CodY.